We begin with the raw amino-acid sequence, 187 residues long: Mast cell-expressed membrane protein 1 (187 aa).

The Cytoplasmic segment spans residues 1–85; the sequence is MEVEEIYKHQ…PCWLYRAILS (85 aa). A disordered region spans residues 49 to 71; it reads DHAKGGHSRPTSQVPAQCRPPSD. A helical; Signal-anchor for type II membrane protein membrane pass occupies residues 86–106; the sequence is LYILLALAFVLCIILSAFIMV. Topologically, residues 107–187 are extracellular; it reads KNAEMSKELL…LQKMPQSSPQ (81 aa). Asparagine 124 carries an N-linked (GlcNAc...) asparagine glycan.

In terms of tissue distribution, expressed specifically in mast cells. Found primarily in lung.

The protein localises to the membrane. The protein is Mast cell-expressed membrane protein 1 of Homo sapiens (Human).